Consider the following 789-residue polypeptide: Disintegrin and metalloproteinase domain-containing protein 7 (789 aa).

The first 25 residues, 1–25, serve as a signal peptide directing secretion; that stretch reads MFPTGIFLMSVLISQMQGRGIVGVE. A propeptide spanning residues 26–176 is cleaved from the precursor; that stretch reads GQELVHPKKL…NYSCEGLNFT (151 aa). 3 N-linked (GlcNAc...) asparagine glycosylation sites follow: N84, N167, and N174. At 177 to 668 the chain is on the extracellular side; that stretch reads KKSTLIDAKI…WGEALNLTSV (492 aa). A Peptidase M12B domain is found at 199-393; it reads KFIELFVVAD…QKPACILNNP (195 aa). Disulfide bonds link C310–C388, C350–C372, C352–C357, and C459–C479. In terms of domain architecture, Disintegrin spans 401 to 487; that stretch reads YPFCGNKKVD…ECPKDESQAN (87 aa). N-linked (GlcNAc...) asparagine glycans are attached at residues N583, N628, and N664. A helical transmembrane segment spans residues 669–689; that stretch reads SIMVVVLVMVIIGVGLVILLI. The Cytoplasmic portion of the chain corresponds to 690 to 789; sequence RYQKCIKMKQ…DSQSDCTRLG (100 aa). The span at 762–771 shows a compositional bias: basic and acidic residues; it reads DPRGIADPKQ. A disordered region spans residues 762–789; the sequence is DPRGIADPKQNDNMNLNLDSQSDCTRLG. The span at 772 to 789 shows a compositional bias: polar residues; it reads NDNMNLNLDSQSDCTRLG.

Interacts with ITM2B in sperm; the interaction increases following capacitation. Interacts with HSPA5 and CANX. As to expression, expressed specifically in the caput region of the epididymis (at protein level).

It localises to the membrane. In terms of biological role, required for normal male fertility via maintenance of epithelial cell morphology in the caput epididymis and subsequently correct epididymis lumen structure required for sperm development. Plays a role in sperm motility, flagella morphology and tyrosine phosphorylation during sperm capacitance. Plays a role in normal expression levels of HSPA5, ITM2B and ADAM2 in sperm both prior to and post-capacitation. This is a non catalytic metalloprotease-like protein. The chain is Disintegrin and metalloproteinase domain-containing protein 7 from Rattus norvegicus (Rat).